Here is a 469-residue protein sequence, read N- to C-terminus: Adenosylhomocysteinase (469 aa).

3 residues coordinate substrate: T63, D139, and E164. An NAD(+)-binding site is contributed by 165-167 (TTT). K194 and D198 together coordinate substrate. Residues N199, 228 to 233 (GYGDVG), E251, N300, 321 to 323 (IGH), and N375 contribute to the NAD(+) site.

This sequence belongs to the adenosylhomocysteinase family. NAD(+) is required as a cofactor.

It localises to the cytoplasm. It carries out the reaction S-adenosyl-L-homocysteine + H2O = L-homocysteine + adenosine. The protein operates within amino-acid biosynthesis; L-homocysteine biosynthesis; L-homocysteine from S-adenosyl-L-homocysteine: step 1/1. May play a key role in the regulation of the intracellular concentration of adenosylhomocysteine. The polypeptide is Adenosylhomocysteinase (Pseudomonas syringae pv. syringae (strain B728a)).